The primary structure comprises 224 residues: Lipoprotein-releasing system ATP-binding protein LolD (224 aa).

The ABC transporter domain maps to 4–224; it reads YTAKDISKNY…TLLDGSLQEE (221 aa). 40–47 lines the ATP pocket; it reads GASGSGKT.

Belongs to the ABC transporter superfamily. Lipoprotein translocase (TC 3.A.1.125) family. As to quaternary structure, the complex is composed of two ATP-binding proteins (LolD) and two transmembrane proteins (LolC and LolE).

It localises to the cell inner membrane. Its function is as follows. Part of the ABC transporter complex LolCDE involved in the translocation of mature outer membrane-directed lipoproteins, from the inner membrane to the periplasmic chaperone, LolA. Responsible for the formation of the LolA-lipoprotein complex in an ATP-dependent manner. In Desulfotalea psychrophila (strain LSv54 / DSM 12343), this protein is Lipoprotein-releasing system ATP-binding protein LolD.